Consider the following 320-residue polypeptide: MEMRNTTPDFILLGLFNHTRAHQVLFMMLLATVLTSLFSNALMILLIHWDHRLHRPMYFLLSQLSLMDMMLVSTTVPKMAADYLTGNKAISRAGCGVQIFFLPTLGGGECFLLAAMAYDRYAAVCHPLRYPTLMSWQLCLRMTMSSWLLGAADGLLQAVATLSFPYCGAHEIDHFFCEAPVLVRLACADTSVFENAMYICCVLMLLVPFSLILSSYGLILAAVLLMRSTEARKKAFATCSSHVAVVGLFYGAGIFTYMRPKSHRSTNHDKVVSAFYTMFTPLLNPLIYSVRNSEVKEALKRWLGTCVNLKHQQNEAHRSR.

At 1-23 the chain is on the extracellular side; it reads MEMRNTTPDFILLGLFNHTRAHQ. N17 is a glycosylation site (N-linked (GlcNAc...) asparagine). The helical transmembrane segment at 24–47 threads the bilayer; that stretch reads VLFMMLLATVLTSLFSNALMILLI. The Cytoplasmic segment spans residues 48 to 55; it reads HWDHRLHR. A helical transmembrane segment spans residues 56-77; sequence PMYFLLSQLSLMDMMLVSTTVP. Residues 78–98 lie on the Extracellular side of the membrane; it reads KMAADYLTGNKAISRAGCGVQ. The cysteines at positions 95 and 187 are disulfide-linked. A helical transmembrane segment spans residues 99 to 118; the sequence is IFFLPTLGGGECFLLAAMAY. Residues 119–137 are Cytoplasmic-facing; the sequence is DRYAAVCHPLRYPTLMSWQ. Residues 138–156 traverse the membrane as a helical segment; that stretch reads LCLRMTMSSWLLGAADGLL. Residues 157–193 are Extracellular-facing; it reads QAVATLSFPYCGAHEIDHFFCEAPVLVRLACADTSVF. Residues 194–217 traverse the membrane as a helical segment; sequence ENAMYICCVLMLLVPFSLILSSYG. The Cytoplasmic portion of the chain corresponds to 218-234; sequence LILAAVLLMRSTEARKK. Residues 235–257 traverse the membrane as a helical segment; that stretch reads AFATCSSHVAVVGLFYGAGIFTY. Residues 258-270 are Extracellular-facing; sequence MRPKSHRSTNHDK. A helical membrane pass occupies residues 271–290; that stretch reads VVSAFYTMFTPLLNPLIYSV. At 291 to 320 the chain is on the cytoplasmic side; sequence RNSEVKEALKRWLGTCVNLKHQQNEAHRSR.

Belongs to the G-protein coupled receptor 1 family.

The protein resides in the cell membrane. Functionally, odorant receptor. In Homo sapiens (Human), this protein is Olfactory receptor 2T12 (OR2T12).